A 156-amino-acid polypeptide reads, in one-letter code: MSARPSLPPLPAKPAGSPRLRERPAPVGPGGEDAYSLLLRPQLGTRKVARAEEAGGEEGKREAEAWTRRAAASARRGGELRTEEPPPPAARLCCLGGGCGGGGGGGQKVSATASIPFSCKRALLTSTIPLSPPAKRRGIRTWGHPSYLTPSPTMRD.

Pro residues predominate over residues 1–12; that stretch reads MSARPSLPPLPA. Disordered regions lie at residues 1-89 and 129-156; these read MSAR…PPPA and PLSPPAKRRGIRTWGHPSYLTPSPTMRD. Residues 49–67 are compositionally biased toward basic and acidic residues; sequence ARAEEAGGEEGKREAEAWT.

This is an uncharacterized protein from Homo sapiens (Human).